The primary structure comprises 1221 residues: Adhesion G-protein coupled receptor G6 (1221 aa).

Positions 1–37 (MMFRSDRMWSCHWKWKPSPLLFLFALYIMCVPHSVWG) are cleaved as a signal peptide. Topologically, residues 38-862 (CANCRVVLSN…ASQLDARNTK (825 aa)) are extracellular. The cysteines at positions 41 and 67 are disulfide-linked. Residues 41-149 (CRVVLSNPSG…KGFNASYIRV (109 aa)) form the CUB domain. Ca(2+) is bound by residues Glu-89 and Asp-97. Cys-94 and Cys-111 are disulfide-bonded. N-linked (GlcNAc...) asparagine glycosylation occurs at Asn-121. Ca(2+)-binding residues include Asp-134, Ser-136, and Ile-137. N-linked (GlcNAc...) asparagine glycosylation is found at Asn-143, Asn-206, Asn-258, Asn-314, Asn-324, Asn-353, Asn-438, Asn-445, Asn-452, Asn-485, Asn-488, and Asn-505. The 203-residue stretch at 154–356 (RNQKVILPQT…ALKAESNLSC (203 aa)) folds into the Pentraxin (PTX) domain. Cystine bridges form between Cys-186–Cys-254 and Cys-231–Cys-277. The mediates interaction with laminin-2 stretch occupies residues 473–837 (EPRLVLWALL…SDASETVCLC (365 aa)). 2 cysteine pairs are disulfide-bonded: Cys-525–Cys-560 and Cys-548–Cys-580. Residues Asn-563, Asn-593, Asn-600, Asn-605, Asn-667, Asn-673, Asn-695, Asn-704, Asn-750, Asn-776, Asn-811, and Asn-818 are each glycosylated (N-linked (GlcNAc...) asparagine). One can recognise a GAIN-B domain in the interval 670 to 853 (SHVNITTRNL…GVLMDLPRSA (184 aa)). Cystine bridges form between Cys-803/Cys-835 and Cys-822/Cys-837. The segment at 803 to 853 (CAFWDLNKNKSFGGWNTSGCVAHRDSDASETVCLCNHFTHFGVLMDLPRSA) is GPS. The stachel stretch occupies residues 842-850 (HFGVLMDLP). The chain crosses the membrane as a helical span at residues 863-883 (VLTFISYIGCGISAIFSAATL). The Cytoplasmic segment spans residues 884-903 (LTYVAFEKLRRDYPSKILMN). A helical membrane pass occupies residues 904–924 (LSTALLFLNLLFLLDGWITSF). Topologically, residues 925-929 (NVDGL) are extracellular. A helical transmembrane segment spans residues 930–950 (CIAVAVLLHFFLLATFTWMGL). The Cytoplasmic segment spans residues 951 to 970 (EAIHMYIALVKVFNTYIRRY). The chain crosses the membrane as a helical span at residues 971-991 (ILKFCIIGWGLPALVVSVVLA). The Extracellular portion of the chain corresponds to 992–1024 (SRNNNEVYGKESYGKEKGDEFCWIQDPVIFYVT). Residues 1025 to 1045 (CAGYFGVMFFLNIAMFIVVMV) form a helical membrane-spanning segment. Topologically, residues 1046–1069 (QICGRNGKRSNRTLREEVLRNLRS) are cytoplasmic. Residues 1070-1090 (VVSLTFLLGMTWGFAFFAWGP) form a helical membrane-spanning segment. Over 1091 to 1092 (LN) the chain is Extracellular. Residues 1093–1113 (IPFMYLFSIFNSLQGLFIFIF) traverse the membrane as a helical segment. Residue Asn-1103 participates in 17alpha-hydroxyprogesterone binding. The Cytoplasmic segment spans residues 1114 to 1221 (HCAMKENVQK…GQVLVKTGPC (108 aa)). The disordered stretch occupies residues 1156–1176 (NLGKSLSSSSIGSNSTYLTSK). Ser-1165 and Ser-1168 each carry phosphoserine.

This sequence belongs to the G-protein coupled receptor 2 family. Adhesion G-protein coupled receptor (ADGR) subfamily. Heterodimer of 2 chains generated by proteolytic processing; the large extracellular N-terminal fragment and the membrane-bound C-terminal fragment predominantly remain associated and non-covalently linked. Interacts with Laminin-2; this interaction stabilizes the receptor in an inactive state. Laminin-2 polymerization could facilitate ADGRG6-NTF removal, thereby exposing the tethered agonist to drive myelination. Interacts with PRNP. Interacts with ITGB1. Interacts with LRP1. Proteolytically cleaved into 2 conserved sites: one in the GPS region of the GAIN-B domain (S1 site) and the other in the middle of the extracellular domain (S2 site). The proteolytic cleavage at S1 site generates an extracellular subunit and a seven-transmembrane subunit. Furin is involved in the cleavage of the S2 site generating a soluble fragment. Processing at the GPS region occurred independent of and probably prior to the cleavage at the S2 site. Proteolytic cleavage is required for activation of the receptor. In terms of processing, highly glycosylated. In terms of tissue distribution, expressed in placenta and to a lower extent in pancreas and liver. Detected in aortic endothelial cells but not in skin microvascular endothelial cells.

The protein resides in the cell membrane. Forms a heterodimer of 2 chains generated by proteolytic processing that remain associated through non-covalent interactions mediated by the GAIN-B domain. In the inactivated receptor, the Stachel sequence (also named stalk) is embedded in the GAIN-B domain, where it adopts a beta-strand conformation. On activation, the Stachel moves into the 7 transmembrane region and adopts a twisted hook-shaped configuration that forms contacts within the receptor, leading to coupling of a G-alpha protein, which activates signaling. The cleaved GAIN-B and N-terminal domains can then dissociate from the rest of the receptor. Its function is as follows. Adhesion G-protein coupled receptor (aGPCR) for steroid hormones, such as progesterone and 17alpha-hydroxyprogesterone (17OHP). Involved in many biological processes, such as myelination, sprouting angiogenesis, placenta, ear and cartilage development. Ligand binding causes a conformation change that triggers signaling via guanine nucleotide-binding proteins (G proteins) and modulates the activity of downstream effectors, such as adenylate cyclase. ADGRG6 is coupled to G(i) G alpha proteins and mediates inhibition of adenylate cyclase. Also able to couple to G(q) G proteins. Involved in myelination of the peripheral nervous system: required for differentiation of promyelinating Schwann cells and for normal myelination of axons. Also acts as a regulator of body length and bone mass. Acts as a regulator of blood-brain barrier formation in the central nervous system vie its association with LRP1 and ITGB1. The polypeptide is Adhesion G-protein coupled receptor G6 (Homo sapiens (Human)).